The sequence spans 105 residues: Small ribosomal subunit protein uS10 (105 aa).

It belongs to the universal ribosomal protein uS10 family. As to quaternary structure, part of the 30S ribosomal subunit.

Functionally, involved in the binding of tRNA to the ribosomes. The polypeptide is Small ribosomal subunit protein uS10 (Phytoplasma australiense).